The sequence spans 75 residues: MMKYRRKKKPKVCKLCQSKIDYVDYKDVKLLREFLTEKEKIIPRRVTGNCAKHQRMVKIAIKRARQMALLPYVKY.

This sequence belongs to the bacterial ribosomal protein bS18 family. As to quaternary structure, part of the 30S ribosomal subunit. Forms a tight heterodimer with protein bS6.

In terms of biological role, binds as a heterodimer with protein bS6 to the central domain of the 16S rRNA, where it helps stabilize the platform of the 30S subunit. This chain is Small ribosomal subunit protein bS18, found in Thermosipho melanesiensis (strain DSM 12029 / CIP 104789 / BI429).